We begin with the raw amino-acid sequence, 1697 residues long: Phosphatidylinositol 3-kinase 3 (1697 aa).

Disordered stretches follow at residues R57–C91, I169–I229, K244–I279, K310–G376, S398–S428, and D440–E504. 3 stretches are compositionally biased toward low complexity: residues N60–N87, N170–N196, and N212–N222. Composition is skewed to low complexity over residues N312–S374 and S398–S408. Polar residues-rich tracts occupy residues I409 to S428 and S444 to F456. Positions N457–D503 are enriched in low complexity. Positions P737–E823 constitute a PI3K-RBD domain. The C2 PI3K-type domain occupies V888–K1036. One can recognise a PIK helical domain in the interval G1060 to Y1238. Residues I1304–T1581 form the PI3K/PI4K catalytic domain. Residues S1310–V1316 form a G-loop region. The segment at G1447–N1455 is catalytic loop. Residues H1466–T1492 form an activation loop region. Over residues A1609 to L1625 the composition is skewed to low complexity. Residues A1609–K1697 are disordered. 5 tandem repeats follow at residues Q1622–D1626, L1627–D1631, L1632–D1636, S1642–D1646, and L1647–D1651. The interval Q1622 to D1651 is 5 X 5 AA approximate repeats. Composition is skewed to basic and acidic residues over residues D1626–N1681 and D1688–K1697. The interval K1659 to E1672 is 7 X 2 AA tandem repeats of K-E.

Belongs to the PI3/PI4-kinase family.

The enzyme catalyses a 1,2-diacyl-sn-glycero-3-phospho-(1D-myo-inositol) + ATP = a 1,2-diacyl-sn-glycero-3-phospho-(1D-myo-inositol-3-phosphate) + ADP + H(+). This chain is Phosphatidylinositol 3-kinase 3 (pikC), found in Dictyostelium discoideum (Social amoeba).